We begin with the raw amino-acid sequence, 527 residues long: MPAPVNIPSMFDTILVLDFGSQYSHLITRRLREFNVYAEMLPCTQKIAELPWKPKGVILSGGPYSVYAEGSPHVDHAVFDLGVPILGICYGMQELAWINGKGVHAGEKKEFGHATIHVEKPSDPLFHGIDNFQVWMSHGDKLNALPTGYEVVATSDNSPYAGIAHTSEKIWGIQFHPEVTHTTKGKQLLQNFAVDICGAAQKWSMENFVDTEIQRIRDLVGPHAEVIGAVSGGVDSTVGAKLMKEAIGDRFHAILVDNGVMRLNECENVKKTLGEGLGINLNVVDAADLFLGKLKGVTDPEKKRKIIGNTFIEVFEEEAAKIQPTHPEAGEIEFLLQGTLYPDVIESISFKGPSQTIKTHHNVGGLLDNMKLKLIEPLRELFKDEVRKLGEIMGIPHDLVWRHPFPGPGIAIRVLGEVTPSQVEIARKADFIYIEEIKKAGIYEEISQAFACLLPVKSVGVMGDQRTYEQVIALRAIETVDFMTADWYIFDANFLKTVARRIVNEVPGVARVVYDITSKPPATVEWE.

Residues 13 to 202 (TILVLDFGSQ…AVDICGAAQK (190 aa)) form the Glutamine amidotransferase type-1 domain. The active-site Nucleophile is the Cys-89. Active-site residues include His-176 and Glu-178. Positions 203 to 402 (WSMENFVDTE…MGIPHDLVWR (200 aa)) constitute a GMPS ATP-PPase domain. Residue 231–237 (SGGVDST) participates in ATP binding. Positions 304, 464, 519, and 525 each coordinate XMP.

Homodimer. The cofactor is Mg(2+).

It is found in the cytoplasm. Its subcellular location is the cytosol. The catalysed reaction is XMP + L-glutamine + ATP + H2O = GMP + L-glutamate + AMP + diphosphate + 2 H(+). It participates in purine metabolism; GMP biosynthesis; GMP from XMP (L-Gln route): step 1/1. In terms of biological role, catalyzes the conversion of xanthine monophosphate (XMP) to GMP in the presence of glutamine and ATP through an adenyl-XMP intermediate. The protein is GMP synthase [glutamine-hydrolyzing] (GUA1) of Yarrowia lipolytica (strain CLIB 122 / E 150) (Yeast).